We begin with the raw amino-acid sequence, 83 residues long: uncharacterized protein (83 aa).

The first 20 residues, 1–20 (MRRALTLAVLATCAVLPALA), serve as a signal peptide directing secretion.

To P.denitrificans and M.extorquens MoxJ.

This is an uncharacterized protein from Paracoccus denitrificans.